Here is a 460-residue protein sequence, read N- to C-terminus: Endoglucanase C (460 aa).

The signal sequence occupies residues Met-1 to Ala-32. The active-site Proton donor is the Glu-99. Residue Asp-155 is the Nucleophile of the active site. The Dockerin domain occupies Lys-400–Asn-460.

Belongs to the glycosyl hydrolase 8 (cellulase D) family. Monomer. Post-translationally, there are two forms of the cellulase. The shorter form lacks probably the C-terminal reiterated domains.

It carries out the reaction Endohydrolysis of (1-&gt;4)-beta-D-glucosidic linkages in cellulose, lichenin and cereal beta-D-glucans.. Its pathway is glycan metabolism; cellulose degradation. In terms of biological role, the biological conversion of cellulose to glucose generally requires three types of hydrolytic enzymes: (1) Endoglucanases which cut internal beta-1,4-glucosidic bonds; (2) Exocellobiohydrolases that cut the disaccharide cellobiose from the non-reducing end of the cellulose polymer chain; (3) Beta-1,4-glucosidases which hydrolyze the cellobiose and other short cello-oligosaccharides to glucose. In Ruminiclostridium cellulolyticum (strain ATCC 35319 / DSM 5812 / JCM 6584 / H10) (Clostridium cellulolyticum), this protein is Endoglucanase C (celCCC).